A 971-amino-acid polypeptide reads, in one-letter code: MDPVRPLFRGPTPVHPSQCVRMPGCWPQAPRPLEPAWGRAGPAGRGLVFRKPEDSSPPLQPVQKDSVGLVSMFRGMGLDTAFRPPSKREVPPLGRGVLGRGLSANMVRKDREEPRSSLPDPSVLAAGDSKLAEASVGWSRMLGRGSSEVSLLPLGRAASSIGRGMDKPPSAFGLTARDPPRLPQPPALSPTSLHSADPPPVLTMERKEKELLVKQGSKGTPQSLGLNLIKIQCHNEAVYQYHVTFSPSVECKSMRFGMLKDHQSVTGNVTAFDGSILYLPVKLQQVVELKSQRKTDDAEISIKIQLTKILEPCSDLCIPFYNVVFRRVMKLLDMKLVGRNFYDPTSAMVLQQHRLQIWPGYAASIRRTDGGLFLLADVSHKVIRNDSVLDVMHAIYQQNKEHFQDECSKLLVGSIVITRYNNRTYRIDDVDWNKTPKDSFVMSDGKEITFLEYYSKNYGITVKEDDQPLLIHRPSERQNNHGMLLKGEILLLPELSFMTGIPEKMKKDFRAMKDLTQQINLSPKQHHGALECLLQRISQNETASNELTRWGLSLHKDVHKIEGRLLPMERINLRNTSFVTSEDLNWVKEVTRDASILTIPMHFWALFYPKRAMDQARELVNMLEKIAGPIGMRISPPAWVELKDDRIETYIRTIQSLLGVEGKIQMVVCIIMGTRDDLYGAIKKLCCVQSPVPSQVINVRTIGQPTRLRSVAQKILLQMNCKLGGELWGVDIPLKQLMVIGMDVYHDPSRGMRSVVGFVASINLTLTKWYSRVVFQMPHQEIVDSLKLCLVGSLKKYYEVNHCLPEKIVVYRDGVSDGQLKTVANYEIPQLQKCFEAFDNYHPKMVVFVVQKKISTNLYLAAPDHFVTPSPGTVVDHTITSCEWVDFYLLAHHVRQGCGIPTHYICVLNTANLSPDHMQRLTFKLCHMYWNWPGTIRVPAPCKYAHKLAFLSGQILHHEPAIQLCGNLFFL.

Position 45 is a symmetric dimethylarginine (R45). At R74 the chain carries Omega-N-methylarginine; by PRMT5; alternate. R74 carries the symmetric dimethylarginine; by PRMT5; alternate modification. Residue R83 is modified to Omega-N-methylarginine; alternate. R83 and R95 each carry symmetric dimethylarginine; alternate. R95 is subject to Omega-N-methylarginine; by PRMT5; alternate. Position 100 is a symmetric dimethylarginine; by PRMT5; alternate (R100). Residue R100 is modified to Omega-N-methylarginine; alternate. The tract at residues 102 to 124 (LSANMVRKDREEPRSSLPDPSVL) is disordered. Residues R144 and R156 each carry the symmetric dimethylarginine modification. Residues 159-200 (SSIGRGMDKPPSAFGLTARDPPRLPQPPALSPTSLHSADPPP) form a disordered region. R163 is subject to Symmetric dimethylarginine; by PRMT5. Residues 387–500 (SVLDVMHAIY…LLPELSFMTG (114 aa)) enclose the PAZ domain. R549 carries the post-translational modification Symmetric dimethylarginine; by PRMT5. The region spanning 666 to 957 (MVVCIIMGTR…LAFLSGQILH (292 aa)) is the Piwi domain. Residues D743, E781, D813, and H946 contribute to the active site.

Belongs to the argonaute family. Piwi subfamily. Interacts with DDX4, MAEL, EIF3A, EIF4E, EIF4G, PRMT5 and WDR77. Associates with EIF4E- and EIF4G-containing m7G cap-binding complexes. Interacts (when methylated on arginine residues) with TDRD1 and TDRKH/TDRD2. Interacts with TDRD12. Component of the PET complex, at least composed of EXD1, PIWIL2, TDRD12 and piRNAs. Interacts with MOV10L1. Interacts with GPAT2. Interacts with Tex19.1 and, probably, Tex19.2. Interacts (via PIWI domain) with BMAL1 and CLOCK. Interacts with GSK3B. Interacts with TEX15. Requires Mg(2+) as cofactor. In terms of processing, arginine methylation by PRMT5 is required for the interaction with Tudor domain-containing protein TDRD1 and subsequent localization to the meiotic nuage, also named P granule. Expressed in adult testis, specifically in spermatocytes and in spermatogonia. Only detected in primordial germ cells of both sexes. Widely expressed in tumors. Also present at early stages of oocyte growth. Present in the mitotic spermatogonia. Not detected in the first stages of meiosis (preleptotene and leptotene). Detected at the late zygotene stage and increases throughout pachytene, declining from this stage onward until expression stops at the early round spermatid stage (at protein level).

The protein resides in the cytoplasm. In terms of biological role, endoribonuclease that plays a central role during spermatogenesis by repressing transposable elements and preventing their mobilization, which is essential for the germline integrity. Plays an essential role in meiotic differentiation of spermatocytes, germ cell differentiation and in self-renewal of spermatogonial stem cells. Its presence in oocytes suggests that it may participate in similar functions during oogenesis in females. Acts via the piRNA metabolic process, which mediates the repression of transposable elements during meiosis by forming complexes composed of piRNAs and Piwi proteins and govern the methylation and subsequent repression of transposons. During piRNA biosynthesis, plays a key role in the piRNA amplification loop, also named ping-pong amplification cycle, by acting as a 'slicer-competent' piRNA endoribonuclease that cleaves primary piRNAs, which are then loaded onto 'slicer-incompetent' PIWIL4. PIWIL2 slicing produces a pre-miRNA intermediate, which is then processed in mature piRNAs, and as well as a 16 nucleotide by-product that is degraded. Required for PIWIL4/MIWI2 nuclear localization and association with secondary piRNAs antisense. Besides their function in transposable elements repression, piRNAs are probably involved in other processes during meiosis such as translation regulation. Indirectly modulates expression of genes such as PDGFRB, SLC2A1, ITGA6, GJA7, THY1, CD9 and STRA8. Represses circadian rhythms by promoting the stability and activity of core clock components BMAL1 and CLOCK by inhibiting GSK3B-mediated phosphorylation and ubiquitination-dependent degradation of these proteins. In Mus musculus (Mouse), this protein is Piwi-like protein 2.